We begin with the raw amino-acid sequence, 449 residues long: Sensor protein QseC (449 aa).

The Cytoplasmic segment spans residues 1–12 (MKLTQRLSLRVR). A helical membrane pass occupies residues 13–33 (LTLIFLILVSITWAISSFVAW). Topologically, residues 34-161 (RKTTDNVDEL…REDMALAIVA (128 aa)) are periplasmic. The helical transmembrane segment at 162–182 (AQLTPWLIALPFMLLILLLLL) threads the bilayer. In terms of domain architecture, HAMP spans 183-235 (HRELRPLKKLAQALRFRSPESETPLDAKGVPSEVRPLVEALNQLFSRIHSMMV). Topologically, residues 183 to 449 (HRELRPLKKL…EGGFEAVVRW (267 aa)) are cytoplasmic. One can recognise a Histidine kinase domain in the interval 243-449 (DAAHELRSPL…EGGFEAVVRW (207 aa)). H246 bears the Phosphohistidine; by autocatalysis mark.

It is found in the cell inner membrane. The catalysed reaction is ATP + protein L-histidine = ADP + protein N-phospho-L-histidine.. Its function is as follows. Member of a two-component regulatory system QseB/QseC. Activates the flagella regulon by activating transcription of FlhDC. May activate QseB by phosphorylation. The chain is Sensor protein QseC (qseC) from Salmonella typhi.